Consider the following 171-residue polypeptide: Co-chaperone protein HscB (171 aa).

One can recognise a J domain in the interval 2–74; the sequence is DYFTLFGLPA…LTRAEYLLSL (73 aa).

Belongs to the HscB family. In terms of assembly, interacts with HscA and stimulates its ATPase activity. Interacts with IscU.

Functionally, co-chaperone involved in the maturation of iron-sulfur cluster-containing proteins. Seems to help targeting proteins to be folded toward HscA. This is Co-chaperone protein HscB from Klebsiella pneumoniae (strain 342).